The following is a 279-amino-acid chain: Troponin T, fast skeletal muscle (279 aa).

Residues 1–21 (MSDEEVEHVEEQYEEEEEAQE) are compositionally biased toward acidic residues. The interval 1–82 (MSDEEVEHVE…EKVDFDDIQK (82 aa)) is disordered. The residue at position 2 (Ser2) is an N-acetylserine. Ser2 carries the phosphoserine modification. Basic and acidic residues-rich tracts occupy residues 28 to 49 (EVHE…ALED) and 70 to 82 (PEGE…DIQK). Ser98 is subject to Phosphoserine. Over residues 121-163 (RAERAEQQRIRAEKERERQNRLAEEKARREEEDAKRRAEEDLK) the composition is skewed to basic and acidic residues. Residues 121–200 (RAERAEQQRI…TAREMKKKIL (80 aa)) form a disordered region. Ser169, Ser176, and Ser177 each carry phosphoserine. Positions 191–200 (TAREMKKKIL) are enriched in basic and acidic residues. Ser213 is modified (phosphoserine). A Phosphotyrosine modification is found at Tyr229.

The protein belongs to the troponin T family.

In terms of biological role, troponin T is the tropomyosin-binding subunit of troponin, the thin filament regulatory complex which confers calcium-sensitivity to striated muscle actomyosin ATPase activity. The chain is Troponin T, fast skeletal muscle (TNNT3) from Oryctolagus cuniculus (Rabbit).